The primary structure comprises 1083 residues: Integrator complex subunit 3 homolog (1083 aa).

3 disordered regions span residues 551–579, 929–953, and 1014–1083; these read NEAV…DLPL, YPSS…TPSA, and AVGR…NDSD. The segment covering 942–953 has biased composition (low complexity); the sequence is KGSSAASSTPSA. 4 positions are modified to phosphoserine: serine 1053, serine 1054, serine 1058, and serine 1059. Over residues 1066-1077 the composition is skewed to basic residues; sequence HKVTQPAKKRKK.

The protein belongs to the Integrator subunit 3 family. Belongs to the multiprotein complex Integrator, at least composed of IntS1, IntS2, IntS3, IntS4, omd/IntS5, IntS6, defl/IntS7, IntS8, IntS9, IntS10, IntS11, IntS12, asun/IntS13, IntS14 and IntS15. The core complex associates with protein phosphatase 2A subunits mts/PP2A and Pp2A-29B, to form the Integrator-PP2A (INTAC) complex.

Its subcellular location is the nucleus. It is found in the cytoplasm. In terms of biological role, component of the integrator complex, a multiprotein complex that terminates RNA polymerase II (Pol II) transcription in the promoter-proximal region of genes. The integrator complex provides a quality checkpoint during transcription elongation by driving premature transcription termination of transcripts that are unfavorably configured for transcriptional elongation: the complex terminates transcription by (1) catalyzing dephosphorylation of the C-terminal domain (CTD) of Pol II subunit Polr2A/Rbp1 and Spt5, and (2) degrading the exiting nascent RNA transcript via endonuclease activity. The integrator complex is also involved in the 3'-end processing of the U7 snRNA, and also the spliceosomal snRNAs U1, U2, U4 and U5. This chain is Integrator complex subunit 3 homolog (IntS3), found in Drosophila grimshawi (Hawaiian fruit fly).